We begin with the raw amino-acid sequence, 611 residues long: Protein Pixie (611 aa).

4Fe-4S ferredoxin-type domains lie at 15 to 45 (RIAIVSDDKCKPKRCRQECKKTCPVVRMGKL) and 54 to 83 (KIASLSEELCIGCGICVKKCPFEAITIINL). ABC transporter domains follow at residues 78 to 323 (ITII…FLDG) and 350 to 570 (IKRM…LELL). Residues 118-125 (GQNGIGKS) and 387-394 (GENGTGKT) each bind ATP.

Belongs to the ABC transporter superfamily. ABCE family. As to quaternary structure, interacts with components of eIF3 complex, namely eIF3a, eIF3j, eIF3b, eIF3c and eIF3i. Associates with the 40S ribosome subunit in an ATP-dependent manner and independently from the presence of the eIF3 complex. Forms a complex with Git and Pak; the interaction with Pak may be mediated by pix/dPIX. In terms of processing, ubiquitinated by Cnot4. Ubiquitination mediates the recruitment of autophagy receptors to the mitochondrial outer membrane and initiates mitophagy. As to expression, expressed in early and late larval imaginal disks (at protein level).

It is found in the cytoplasm. Functionally, plays a role in translation initiation and quality control of translation. Together with pelo and HBS1, is required for 48S complex formation from 80S ribosomes and dissociation of vacant 80S ribosomes. Stabilizes core components of eIF3 complex promoting their assembly into translation initiation-competent complexes. Together with pelo and HBS1, recognizes stalled ribosomes and promotes dissociation of elongation complexes assembled on non-stop mRNAs; this triggers endonucleolytic cleavage of the mRNA, a mechanism to release non-functional ribosomes and to degrade damaged mRNAs as part of the No-Go Decay (NGD) pathway. Plays a role in the regulation of mRNA turnover. Plays a role in quality control of translation of mitochondrial outer membrane-localized mRNA. As part of the Pink1-regulated signaling, ubiquitinated by Cnot4 upon mitochondria damage; this modification generates polyubiquitin signals that recruits autophagy receptors to the mitochondrial outer membrane to initiate mitophagy. Required in the wing disk for cell division and growth as well as cell survival. During muscle embryogenesis, required for the recruitment of Pak to muscle attachments in the embryo, hence may play a role in proper muscle morphogenesis and proper guidance and targeting of subsets of myotubes. The protein is Protein Pixie of Drosophila melanogaster (Fruit fly).